The chain runs to 341 residues: Acetylpolyamine amidohydrolase (341 aa).

Residue His157 is the Proton donor/acceptor of the active site. Zn(2+)-binding residues include Asp192, His194, and Asp281.

The protein belongs to the histone deacetylase family. In terms of assembly, homodimer. Zn(2+) is required as a cofactor.

It carries out the reaction N-acetylputrescine + H2O = putrescine + acetate. The catalysed reaction is N-acetylcadaverine + H2O = cadaverine + acetate. The protein operates within amine and polyamine metabolism. Involved in polyamine metabolism. Catalyzes the deacetylation of various acetylated polyamines such as N-acetylputrescine and N-acetylcadaverine. The protein is Acetylpolyamine amidohydrolase of Burkholderia pseudomallei (strain 1710b).